Consider the following 231-residue polypeptide: MKVVIVTSVRSLLDASIQFQKTACRHHCNYLSMQVVKEIEEFGTINEKNLEFDTWKDVIQNDEIDALVFYRVKQISISTGVLYESMMRNRTKPISMYFVRDCLAFDGNPPSFRMTSCNINAYNRSKIKDLIILMNMKTCNKKIIGEFIIDNFGSVDALLSIVNSNVTWVTSVINNSNGRGINIRVSNNKMLTITSFRRFVNKLKMYKTTKCASQLDNLCTEMNKMDIIDKK.

The protein belongs to the orthopoxvirus OPG058 family.

The protein resides in the host nucleus. It is found in the host nucleolus. The protein is Protein OPG061 (OPG061) of Homo sapiens (Human).